The following is a 464-amino-acid chain: Agamous-like MADS-box protein AGL92 (464 aa).

In terms of domain architecture, MADS-box spans 1–60; it reads MRTKTKLVLIPDRHFRRATFRKRNAGIRKKLHELTTLCDIKACAVIYSPFENPTVWPSTE. Residues 85-114 adopt a coiled-coil conformation; it reads ETFLRDQITKEQNKLESLRRENRETQLKHF. Positions 443–464 are disordered; it reads TSTGHMPSTTTTTTNNNNNNNV. Low complexity predominate over residues 451–464; sequence TTTTTTNNNNNNNV.

In terms of assembly, interacts with AGL62.

It localises to the nucleus. In terms of biological role, putative transcription factor. This chain is Agamous-like MADS-box protein AGL92 (AGL92), found in Arabidopsis thaliana (Mouse-ear cress).